The chain runs to 940 residues: Valine--tRNA ligase (940 aa).

The 'HIGH' region signature appears at 47 to 57 (PNVTGVLHMGH). Residues 564 to 568 (KLSKS) carry the 'KMSKS' region motif. Lys-567 contacts ATP. Positions 873 to 905 (EEHLLKEKGRLEKERVRLERAVENLERLLGDES) form a coiled coil.

It belongs to the class-I aminoacyl-tRNA synthetase family. ValS type 1 subfamily. As to quaternary structure, monomer.

It is found in the cytoplasm. The enzyme catalyses tRNA(Val) + L-valine + ATP = L-valyl-tRNA(Val) + AMP + diphosphate. In terms of biological role, catalyzes the attachment of valine to tRNA(Val). As ValRS can inadvertently accommodate and process structurally similar amino acids such as threonine, to avoid such errors, it has a 'posttransfer' editing activity that hydrolyzes mischarged Thr-tRNA(Val) in a tRNA-dependent manner. In Chlamydia pneumoniae (Chlamydophila pneumoniae), this protein is Valine--tRNA ligase.